A 964-amino-acid polypeptide reads, in one-letter code: MIVQRTAAPTGSVPPDRHAARPFIPRMIRTFAVPIILGWLVTIAVLNVTVPQLETVGQIQAVSMSPDAAPSMISMKHIGKVFEEGDSDSAAMIVLEGQRPLGDAAHAFYDQMIGRLQADTTHVQSLQDFWGDPLTATGAQSSDGKAAYVQVKLAGNQGESLANESVEAVKTIVERLAPPPGVKVYVTGSAALVADQQQAGDRSLQVIEAVTFTVIIVMLLLVYRSIITSAIMLTMVVLGLLATRGGVAFLGFHRIIGLSTFATNLLVVLAIAAATDYAIFLIGRYQEARGLGQDRESAYYTMFGGTAHVVLGSGLTIAGATFCLSFTRLPYFQTLGVPLAIGMVIVVAAALTLGPAIIAVTSRFGKLLEPKRMARVRGWRKVGAAIVRWPGPILVGAVALALVGLLTLPGYRTNYNDRNYLPADLPANEGYAAAERHFSQARMNPEVLMVESDHDMRNSADFLVINKIAKAIFAVEGISRVQAITRPDGKPIEHTSIPFLISMQGTSQKLTEKYNQDLTARMLEQVNDIQSNIDQMERMHSLTQQMADVTHEMVIQMTGMVVDVEELRNHIADFDDFFRPIRSYFYWEKHCYDIPVCWSLRSVFDTLDGIDVMTEDINNLLPLMQRLDTLMPQLTAMMPEMIQTMKSMKAQMLSMHSTQEGLQDQMAAMQEDSAAMGEAFDASRNDDSFYLPPEVFDNPDFQRGLEQFLSPDGHAVRFIISHEGDPMSQAGIARIAKIKTAAKEAIKGTPLEGSAIYLGGTAAMFKDLSDGNTYDLMIAGISALCLIFIIMLITTRSVVAAAVIVGTVVLSLGASFGLSVLIWQHILGIELHWLVLAMAVIILLAVGADYNLLLVARLKEEIHAGINTGIIRAMGGSGSVVTAAGLVFAFTMMSFAVSELTVMAQVGTTIGMGLLFDTLIVRSFMTPSIAALLGKWFWWPQVVRQRPVPQPWPSPASARTFALV.

Helical transmembrane passes span 31 to 51 (FAVP…VTVP), 203 to 223 (SLQV…LLVY), 230 to 250 (AIML…VAFL), 255 to 275 (IIGL…AAAT), 302 to 322 (MFGG…GATF), 340 to 360 (AIGM…IIAV), 389 to 409 (WPGP…LTLP), 773 to 793 (TYDL…IMLI), 803 to 823 (VIVG…VLIW), 826 to 846 (ILGI…LLAV), 880 to 900 (VVTA…VSEL), and 923 to 943 (SFMT…PQVV).

The protein belongs to the resistance-nodulation-cell division (RND) (TC 2.A.6) family. MmpL subfamily. In terms of assembly, interacts with MmpS5.

It localises to the cell inner membrane. In terms of biological role, part of an export system, which is required for biosynthesis and secretion of siderophores. The chain is Siderophore exporter MmpL5 (mmpL5) from Mycobacterium tuberculosis (strain CDC 1551 / Oshkosh).